We begin with the raw amino-acid sequence, 752 residues long: Ribonucleases P/MRP protein subunit popl-1 (752 aa).

Residues 638–663 (KTTKRKRVNRKKRESKKRRKIEQEKR) are disordered. Basic residues predominate over residues 640-657 (TKRKRVNRKKRESKKRRK).

Component of nuclear RNase P and RNase MRP ribonucleoproteins. Several subunits of RNase P are also part of the RNase MRP complex.

The protein localises to the nucleus. Its subcellular location is the nucleolus. The enzyme catalyses Endonucleolytic cleavage of RNA, removing 5'-extranucleotides from tRNA precursor.. In terms of biological role, component of ribonuclease P, a ribonucleoprotein complex that generates mature tRNA molecules by cleaving their 5'-ends. Also a component of the MRP ribonuclease complex, which cleaves pre-rRNA sequences. The sequence is that of Ribonucleases P/MRP protein subunit popl-1 from Caenorhabditis elegans.